The primary structure comprises 319 residues: Acetyl esterase (319 aa).

Residues 91-93 (HGG) carry the Involved in the stabilization of the negatively charged intermediate by the formation of the oxyanion hole motif. Residues Ser165, Asp262, and His292 contribute to the active site.

It belongs to the 'GDXG' lipolytic enzyme family. Homodimer. Interacts with MalT and MelA.

Its subcellular location is the cytoplasm. Functionally, displays esterase activity towards short chain fatty esters (acyl chain length of up to 8 carbons). Able to hydrolyze triacetylglycerol (triacetin) and tributyrylglycerol (tributyrin), but not trioleylglycerol (triolein) or cholesterol oleate. Negatively regulates MalT activity by antagonizing maltotriose binding. Inhibits MelA galactosidase activity. The polypeptide is Acetyl esterase (Escherichia coli O139:H28 (strain E24377A / ETEC)).